The following is a 146-amino-acid chain: Heat-stable 19 kDa antigen (146 aa).

Residues 1–20 form the signal peptide; sequence MKFSLLSAIAAAVFVPFTSA.

This sequence belongs to the cerato-platanin family. Post-translationally, glycosylated.

It localises to the secreted. The protein is Heat-stable 19 kDa antigen (CSA) of Coccidioides immitis (strain RS) (Valley fever fungus).